We begin with the raw amino-acid sequence, 1363 residues long: DNA-directed RNA polymerase subunit beta (1363 aa).

It belongs to the RNA polymerase beta chain family. As to quaternary structure, the RNAP catalytic core consists of 2 alpha, 1 beta, 1 beta' and 1 omega subunit. When a sigma factor is associated with the core the holoenzyme is formed, which can initiate transcription.

It catalyses the reaction RNA(n) + a ribonucleoside 5'-triphosphate = RNA(n+1) + diphosphate. DNA-dependent RNA polymerase catalyzes the transcription of DNA into RNA using the four ribonucleoside triphosphates as substrates. This Neorickettsia risticii (Ehrlichia risticii) protein is DNA-directed RNA polymerase subunit beta.